The chain runs to 188 residues: dCTP deaminase (188 aa).

Residues 111–116, 135–137, Q156, Y170, and Q180 each bind dCTP; these read KSTYAR and TLE. The active-site Proton donor/acceptor is E137.

It belongs to the dCTP deaminase family. Homotrimer.

It catalyses the reaction dCTP + H2O + H(+) = dUTP + NH4(+). It functions in the pathway pyrimidine metabolism; dUMP biosynthesis; dUMP from dCTP (dUTP route): step 1/2. Catalyzes the deamination of dCTP to dUTP. The protein is dCTP deaminase of Neisseria gonorrhoeae (strain ATCC 700825 / FA 1090).